Here is a 164-residue protein sequence, read N- to C-terminus: Ribonuclease H (164 aa).

Residues 9–150 (DMPRVTIYTD…ADTLANAATD (142 aa)) enclose the RNase H type-1 domain. Asp-18, Glu-56, Asp-78, and Asp-142 together coordinate Mg(2+).

The protein belongs to the RNase H family. As to quaternary structure, monomer. Mg(2+) is required as a cofactor.

It localises to the cytoplasm. It catalyses the reaction Endonucleolytic cleavage to 5'-phosphomonoester.. In terms of biological role, endonuclease that specifically degrades the RNA of RNA-DNA hybrids. This Chromohalobacter salexigens (strain ATCC BAA-138 / DSM 3043 / CIP 106854 / NCIMB 13768 / 1H11) protein is Ribonuclease H.